A 152-amino-acid polypeptide reads, in one-letter code: Large ribosomal subunit protein uL13 (152 aa).

Residues 130–152 (HPHEAQSPEVLDLASKNPKNTRS) form a disordered region.

This sequence belongs to the universal ribosomal protein uL13 family. In terms of assembly, part of the 50S ribosomal subunit.

This protein is one of the early assembly proteins of the 50S ribosomal subunit, although it is not seen to bind rRNA by itself. It is important during the early stages of 50S assembly. This chain is Large ribosomal subunit protein uL13, found in Dinoroseobacter shibae (strain DSM 16493 / NCIMB 14021 / DFL 12).